The following is a 122-amino-acid chain: Acidic phospholipase A2 (122 aa).

Intrachain disulfides connect Cys-26–Cys-115, Cys-28–Cys-44, Cys-43–Cys-95, Cys-49–Cys-122, Cys-50–Cys-88, Cys-57–Cys-81, and Cys-75–Cys-86. Positions 27, 29, and 31 each coordinate Ca(2+). The active site involves His-47. Asp-48 contributes to the Ca(2+) binding site. The active site involves Asp-89.

Belongs to the phospholipase A2 family. Group II subfamily. D49 sub-subfamily. Monomer. Requires Ca(2+) as cofactor. Expressed by the venom gland.

Its subcellular location is the secreted. The enzyme catalyses a 1,2-diacyl-sn-glycero-3-phosphocholine + H2O = a 1-acyl-sn-glycero-3-phosphocholine + a fatty acid + H(+). PLA2 catalyzes the calcium-dependent hydrolysis of the 2-acyl groups in 3-sn-phosphoglycerides. The polypeptide is Acidic phospholipase A2 (Gloydius blomhoffii (Mamushi)).